Consider the following 317-residue polypeptide: Phospholipase A1 1 (317 aa).

An N-terminal signal peptide occupies residues 1–7; the sequence is RLIMFVG. Residues 8–17 constitute a propeptide that is removed on maturation; that stretch reads DPSSSNELDR. C21 and C104 are oxidised to a cystine. Residue N25 is glycosylated (N-linked (GlcNAc...) asparagine). Residue S154 is the Nucleophile of the active site. D182 acts as the Charge relay system in catalysis. An intrachain disulfide couples C193 to C198. Residue N229 is glycosylated (N-linked (GlcNAc...) asparagine). The cysteines at positions 236 and 244 are disulfide-linked. The active-site Charge relay system is H246. Intrachain disulfides connect C261–C285, C262–C310, and C278–C283.

The protein belongs to the AB hydrolase superfamily. Lipase family. Expressed by the venom gland.

It localises to the secreted. The catalysed reaction is a 1,2-diacyl-sn-glycero-3-phosphocholine + H2O = a 2-acyl-sn-glycero-3-phosphocholine + a fatty acid + H(+). Its function is as follows. Catalyzes the hydrolysis of phosphatidylcholine with phospholipase A1 activity. May act as an allergen and induce hemolytic activity. The sequence is that of Phospholipase A1 1 from Dolichovespula maculata (Bald-faced hornet).